Here is a 179-residue protein sequence, read N- to C-terminus: Large ribosomal subunit protein uL6 (179 aa).

Belongs to the universal ribosomal protein uL6 family. As to quaternary structure, part of the 50S ribosomal subunit.

This protein binds to the 23S rRNA, and is important in its secondary structure. It is located near the subunit interface in the base of the L7/L12 stalk, and near the tRNA binding site of the peptidyltransferase center. This chain is Large ribosomal subunit protein uL6, found in Alkaliphilus oremlandii (strain OhILAs) (Clostridium oremlandii (strain OhILAs)).